A 236-amino-acid chain; its full sequence is Leucyl/phenylalanyl-tRNA--protein transferase (236 aa).

The protein belongs to the L/F-transferase family.

The protein localises to the cytoplasm. It carries out the reaction N-terminal L-lysyl-[protein] + L-leucyl-tRNA(Leu) = N-terminal L-leucyl-L-lysyl-[protein] + tRNA(Leu) + H(+). The catalysed reaction is N-terminal L-arginyl-[protein] + L-leucyl-tRNA(Leu) = N-terminal L-leucyl-L-arginyl-[protein] + tRNA(Leu) + H(+). It catalyses the reaction L-phenylalanyl-tRNA(Phe) + an N-terminal L-alpha-aminoacyl-[protein] = an N-terminal L-phenylalanyl-L-alpha-aminoacyl-[protein] + tRNA(Phe). Its function is as follows. Functions in the N-end rule pathway of protein degradation where it conjugates Leu, Phe and, less efficiently, Met from aminoacyl-tRNAs to the N-termini of proteins containing an N-terminal arginine or lysine. This Shewanella sp. (strain ANA-3) protein is Leucyl/phenylalanyl-tRNA--protein transferase.